We begin with the raw amino-acid sequence, 292 residues long: Glycine--tRNA ligase alpha subunit (292 aa).

Belongs to the class-II aminoacyl-tRNA synthetase family. In terms of assembly, tetramer of two alpha and two beta subunits.

It is found in the cytoplasm. The catalysed reaction is tRNA(Gly) + glycine + ATP = glycyl-tRNA(Gly) + AMP + diphosphate. The polypeptide is Glycine--tRNA ligase alpha subunit (Pelotomaculum thermopropionicum (strain DSM 13744 / JCM 10971 / SI)).